We begin with the raw amino-acid sequence, 184 residues long: Exosome complex protein LRP1 (184 aa).

The tract at residues 157-184 (DSTDHIRKASSKKSKRLDKVGKKKGGKK) is disordered. The segment covering 164–184 (KASSKKSKRLDKVGKKKGGKK) has biased composition (basic residues).

The protein belongs to the C1D family. In terms of assembly, associates with nuclear form of the RNA exosome complex. Interacts with RRP4, RRP6, RRP45 and RRP46.

It localises to the nucleus. Its function is as follows. Required for exosome-dependent processing of pre-rRNA and small nucleolar RNA (snRNA) precursors. Involved in processing of 35S pre-rRNA at the A0, A1 and A2 sites. Required for activity of RRP6 in 7S pre-rRNA processing. Also has a role in 3'-processing of U4 and U5 small nuclear RNAs (snRNAs). Acts as a mRNA export factor. Mediates mRNA degradation upon UV irradiation. Maintains genome integrity where it is involved in both non-homologous end joining (NHEJ) and homologous recombination pathway repair of double strand DNA breaks. During NHEJ, required for joining 3'-overhanging ends. Also involved in telomere length regulation and maintenance. This Saccharomyces cerevisiae (strain ATCC 204508 / S288c) (Baker's yeast) protein is Exosome complex protein LRP1 (LRP1).